The following is a 105-amino-acid chain: Large ribosomal subunit protein uL24 (105 aa).

The protein belongs to the universal ribosomal protein uL24 family. Part of the 50S ribosomal subunit.

Its function is as follows. One of two assembly initiator proteins, it binds directly to the 5'-end of the 23S rRNA, where it nucleates assembly of the 50S subunit. In terms of biological role, one of the proteins that surrounds the polypeptide exit tunnel on the outside of the subunit. In Clostridium novyi (strain NT), this protein is Large ribosomal subunit protein uL24.